Consider the following 227-residue polypeptide: MSSTSEATVIHMDGAAGKTPATAVPPPPPPAPTAPVQQQRKAGGVPFLLRSGAEGFRRCMALLDLLLRVAAMGPTLAAAISTGTSDETLSVFTHYFQFRARFDDFSAFTFFMVANAVAAGYLLMSLPFSAFGVIRPKATSVRLLLLICDTIMVVLVTAAASAAAAIVYVAHEGNRRANWVPICMQFHGFCKRTSGAVVASFLAVLIFILLVFLGACAIRRRHTTTKH.

Residues 1–59 lie on the Cytoplasmic side of the membrane; that stretch reads MSSTSEATVIHMDGAAGKTPATAVPPPPPPAPTAPVQQQRKAGGVPFLLRSGAEGFRRC. The segment at 17–37 is disordered; that stretch reads GKTPATAVPPPPPPAPTAPVQ. Residues 23 to 33 are compositionally biased toward pro residues; sequence AVPPPPPPAPT. A helical transmembrane segment spans residues 60-80; the sequence is MALLDLLLRVAAMGPTLAAAI. The Extracellular portion of the chain corresponds to 81–107; it reads STGTSDETLSVFTHYFQFRARFDDFSA. A helical membrane pass occupies residues 108–128; the sequence is FTFFMVANAVAAGYLLMSLPF. Residues 129–149 are Cytoplasmic-facing; sequence SAFGVIRPKATSVRLLLLICD. The helical transmembrane segment at 150-170 threads the bilayer; sequence TIMVVLVTAAASAAAAIVYVA. Residues 171–197 are Extracellular-facing; the sequence is HEGNRRANWVPICMQFHGFCKRTSGAV. Residues 198–218 form a helical membrane-spanning segment; the sequence is VASFLAVLIFILLVFLGACAI. Topologically, residues 219–227 are cytoplasmic; the sequence is RRRHTTTKH.

The protein belongs to the Casparian strip membrane proteins (CASP) family. Homodimer and heterodimers.

Its subcellular location is the cell membrane. Functionally, regulates membrane-cell wall junctions and localized cell wall deposition. Required for establishment of the Casparian strip membrane domain (CSD) and the subsequent formation of Casparian strips, a cell wall modification of the root endodermis that determines an apoplastic barrier between the intraorganismal apoplasm and the extraorganismal apoplasm and prevents lateral diffusion. In Brachypodium distachyon (Purple false brome), this protein is Casparian strip membrane protein 2.